A 917-amino-acid polypeptide reads, in one-letter code: Protein FAN (917 aa).

Positions 176-247 constitute a GRAM domain; the sequence is RLARTSFDKN…QDVRRIYKRR (72 aa). In terms of domain architecture, BEACH-type PH spans 189–286; it reads NISEKLHMEC…DRDDLYFYIA (98 aa). The BEACH domain occupies 290-575; that stretch reads EHHVAEHTAE…QLFVTPHPRR (286 aa). WD repeat units follow at residues 628 to 658, 670 to 700, 712 to 740, 761 to 791, 803 to 833, and 884 to 914; these read IHKE…KMFS, FSNM…YFYS, GHDD…KVWS, EHDV…NIWD, CHSG…NVID, and GHTG…IFWK.

Ubiquitous.

Its function is as follows. Couples the p55 TNF-receptor (TNF-R55 / TNFR1) to neutral sphingomyelinase (N-SMASE). Specifically binds to the N-smase activation domain of TNF-R55. May regulate ceramide production by N-SMASE. The chain is Protein FAN (NSMAF) from Homo sapiens (Human).